Here is a 710-residue protein sequence, read N- to C-terminus: Secretin OutD (710 aa).

Residues 1 to 27 (MLGKGIKKSWGWLGLTVLLLGSPCGWA) form the signal peptide. The tract at residues 28–105 (AEFSASFKGT…DNGVLKVIRS (78 aa)) is N0. Positions 123 to 190 (IGDELVTRVV…DIVNTVDKTG (68 aa)) are N1. Residues 192 to 262 (REMVTVPLTY…VEMIRQLDRK (71 aa)) form an N2 region. The segment at 288–399 (GNGTSGNRNS…INQLDIRRPQ (112 aa)) is N3. A disordered region spans residues 289-353 (NGTSGNRNSS…AFGSTSSSGG (65 aa)). The segment at 401–648 (LVEAIIAEIQ…MLFLRPTIIR (248 aa)) is secretin. The segment at 691–710 (TYTFRQVQSSISDFYKPEGR) is s domain.

The protein belongs to the bacterial secretin family. GSP D subfamily. As to quaternary structure, forms a cylindrical channel with 15 subunits. Interacts with pilotin OutS.

The protein resides in the cell outer membrane. Functionally, involved in a type II secretion system (T2SS, formerly general secretion pathway, GSP) for the export of proteins. Required for the translocation of the multiple pectic enzymes. This subunit forms the outer membrane channel. In Dickeya dadantii (strain 3937) (Erwinia chrysanthemi (strain 3937)), this protein is Secretin OutD (outD).